The following is a 453-amino-acid chain: MTNNNDPKCVVIEEPDDVPVKPPKIFDFTDWPFEIPDIFKRKELSYNYNYDLATSKSLMIVRMIFKWRGSLWQAVYKELIVWICAYSLVSVIYRFALTRSQKDIFERFGEYCDARMGYLPLNFVLGFFCNIIIRRWLKLYTSLGNIDNIALFVSAYVRGTDDRARQIRRNIIRYCVISQCLVFRDIHVGVRRRFPTLEAVAQAGIMLPHELEKFNSIKSRYQKYWVSFNWALELLNVAKTEKSIDGDNARNAIAQEISKFRSALTTVSMYDWVPIPLMYPQLVNMAVHTYFFLCIFTRQFFISADAHNKTEVDLYIPFMTIIEFIFYMGWLKVAMELLNPFGEDADDFDCNLLIDRNLAIGLTSVDDAYDQLPEVKPDVFTGGSVKPLDSDDTRSLKYHFGSAAQMEEISYLKKEENKMIAAGKKPNKLKLWVKSVRRKRFETSATQPSFPIP.

4 helical membrane passes run 78–98 (ELIV…FALT), 113–133 (DARM…NIII), 275–295 (IPLM…FLCI), and 314–334 (LYIP…LKVA).

Belongs to the anion channel-forming bestrophin (TC 1.A.46) family. Calcium-sensitive chloride channel subfamily. In terms of assembly, forms oligomers.

Its subcellular location is the cell membrane. In terms of biological role, forms chloride channels. This chain is Bestrophin homolog 5 (best-5), found in Caenorhabditis elegans.